The sequence spans 388 residues: 2-epi-5-epi-valiolone synthase (388 aa).

NAD(+) is bound by residues 92 to 95, 124 to 128, 148 to 149, Lys161, Lys170, and 188 to 191; these read ERNK, GIVAD, TT, and LLAT. Zn(2+) contacts are provided by Glu203, His267, and His283.

It belongs to the sugar phosphate cyclases superfamily. EEVS-like family. The cofactor is NAD(+). It depends on Co(2+) as a cofactor. Zn(2+) serves as cofactor.

The enzyme catalyses D-sedoheptulose 7-phosphate = 2-epi-5-epi-valiolone + phosphate. Its function is as follows. Catalyzes the cyclization of D-sedoheptulose 7-phosphate to 2-epi-5-epi-valiolone. Probably involved in acarbose biosynthesis. This is 2-epi-5-epi-valiolone synthase from Streptomyces glaucescens.